A 314-amino-acid chain; its full sequence is Olfactory receptor 5P62 (314 aa).

Over 1–28 (MAFIYNGSQTTVTEFILLGLTDDPVLKV) the chain is Extracellular. An N-linked (GlcNAc...) asparagine glycan is attached at Asn-6. The helical transmembrane segment at 29–49 (ILFCIILCIYLVTVFGNLSTI) threads the bilayer. The Cytoplasmic portion of the chain corresponds to 50–57 (LLIGVSSK). A helical transmembrane segment spans residues 58–78 (LHHPMYFFLSHLASVDMGLSS). Over 79-102 (SVTPNMLVNFLTEKNTISYLGCGI) the chain is Extracellular. The cysteines at positions 100 and 192 are disulfide-linked. Residues 103-123 (QLSSAAFFGAVEFFLLAAMAY) traverse the membrane as a helical segment. Residues 124–136 (DRLVAICNPLLYS) are Cytoplasmic-facing. The helical transmembrane segment at 137–157 (TKMSSQVCIQLVAGSYVGGFL) threads the bilayer. Residues 158-199 (NASFVTHFFFSFLFCGPNRVNHFFCDLSPMMELSCSDVSISE) lie on the Extracellular side of the membrane. The chain crosses the membrane as a helical span at residues 200-220 (IVISFSAGSFTMTTLFVIVIP). Residues 221–240 (YFYIFITILKIRSTEGRQKA) are Cytoplasmic-facing. Residues 241-261 (FSTCTSHLTAVTLYYGTIIFI) form a helical membrane-spanning segment. Residues 262-274 (YVMPKSTYSRDQN) are Extracellular-facing. The chain crosses the membrane as a helical span at residues 275 to 295 (KVVSLFYMLVIPVLNPLIYSL). The Cytoplasmic portion of the chain corresponds to 296–314 (RNNEIKDALKRQFYRKTLL).

The protein belongs to the G-protein coupled receptor 1 family.

Its subcellular location is the cell membrane. Potential odorant receptor. The polypeptide is Olfactory receptor 5P62 (Mus musculus (Mouse)).